The chain runs to 86 residues: Large ribosomal subunit protein eL43 (86 aa).

Positions 40, 43, 58, and 61 each coordinate Zn(2+). The C4-type zinc finger occupies 40 to 61; sequence CPFCRSKAVIREAYGIYRCKKC.

This sequence belongs to the eukaryotic ribosomal protein eL43 family. Putative zinc-binding subfamily. As to quaternary structure, part of the 50S ribosomal subunit. The cofactor is Zn(2+).

Functionally, binds to the 23S rRNA. The chain is Large ribosomal subunit protein eL43 from Nanoarchaeum equitans (strain Kin4-M).